Consider the following 373-residue polypeptide: MSEIFYNIVRRVRRDTMREIEVEGDNRYKIYIDTNLDKLYKAFEDYKIKSNSEMFLITDDKVYSIYKDRIEMLKNIYNIKEFYFKNGEENKTLETLQEIYSFLMENNAKRNSIIIALGGGVVGDLVGFVASTYMRGVRYINIPTTLLSQIDSCVGGKVGYNYKGIKNLIGSFYNPEFVFISTNFLKTLDFQRFKDGLGEVIKYGLILDEEIISFIEENYKGVLEKESDKLLYITRTCLILKKQVIEMDYKDLGFRNILNFGHTIGHAIEMTSKNKITHGEAVALGMLVSLKLSEHIYGLDKNLYYRMEKLYKKLGLPTKYKVDNYNLFMYAINHDKKNKDNIRFVLLKDVEKPEVKIEVNKEEILKAIEESIN.

NAD(+)-binding positions include 120–124, 144–145, lysine 157, lysine 166, and 184–187; these read GVVGD, TT, and FLKT. Zn(2+)-binding residues include glutamate 199, histidine 262, and histidine 278.

The protein belongs to the sugar phosphate cyclases superfamily. Dehydroquinate synthase family. NAD(+) is required as a cofactor. It depends on Co(2+) as a cofactor. Zn(2+) serves as cofactor.

It is found in the cytoplasm. The catalysed reaction is 7-phospho-2-dehydro-3-deoxy-D-arabino-heptonate = 3-dehydroquinate + phosphate. It functions in the pathway metabolic intermediate biosynthesis; chorismate biosynthesis; chorismate from D-erythrose 4-phosphate and phosphoenolpyruvate: step 2/7. Catalyzes the conversion of 3-deoxy-D-arabino-heptulosonate 7-phosphate (DAHP) to dehydroquinate (DHQ). This chain is 3-dehydroquinate synthase, found in Clostridium tetani (strain Massachusetts / E88).